A 227-amino-acid polypeptide reads, in one-letter code: Cysteine-rich hydrophobic domain-containing protein 1 (227 aa).

A disordered region spans residues 1–84; it reads MSILLPNMAE…PPRVVSEEHL (84 aa). Residues 13-23 are compositionally biased toward acidic residues; it reads TISELEEEEEA. Residues 24–44 are compositionally biased toward low complexity; sequence ATSSSSPSSSPSSSSSSSVSG. Over residues 45–72 the composition is skewed to acidic residues; sequence PDEDEEDEEEEEEEDEEEEDEEEEEEEV. A coiled-coil region spans residues 46 to 73; the sequence is DEDEEDEEEEEEEDEEEEDEEEEEEEVP.

This sequence belongs to the CHIC family. In terms of processing, palmitoylated. In terms of tissue distribution, expressed moderately in the brain.

Its subcellular location is the cell membrane. It localises to the cytoplasmic vesicle. The polypeptide is Cysteine-rich hydrophobic domain-containing protein 1 (Chic1) (Mus musculus (Mouse)).